Here is a 77-residue protein sequence, read N- to C-terminus: Putative defensin-like protein 160 (77 aa).

The N-terminal stretch at 1–24 (MAKLSCSYFFILMLVFSALLMVEC) is a signal peptide. Cystine bridges form between Cys-30–Cys-77, Cys-40–Cys-59, Cys-45–Cys-71, and Cys-49–Cys-73.

The protein belongs to the DEFL family.

The protein resides in the secreted. In Arabidopsis thaliana (Mouse-ear cress), this protein is Putative defensin-like protein 160 (LCR26).